Reading from the N-terminus, the 594-residue chain is Solute carrier family 22 member 14 (594 aa).

Residues 1–70 (MAGEENFKEE…EFGTFQQRLV (70 aa)) are Cytoplasmic-facing. A helical membrane pass occupies residues 71–91 (ALTFIPSIMSAFFMFADHFVF). Over 92-184 (TAQKPYCNTS…LVCGMETKKD (93 aa)) the chain is Extracellular. N-linked (GlcNAc...) asparagine glycans are attached at residues Asn99, Asn117, Asn125, and Asn150. Residues 185-205 (TAQIMFMAGLPIGSLIFRLIT) traverse the membrane as a helical segment. At 206-210 (DKMGR) the chain is on the cytoplasmic side. The helical transmembrane segment at 211–231 (YPAILLSLLGLIIFGFGTAFM) threads the bilayer. The Extracellular portion of the chain corresponds to 232-235 (NSFH). The helical transmembrane segment at 236–256 (LYLFFRFGISQSVVGYAISSI) threads the bilayer. Over 257-270 (SLATEWLVGEHRAH) the chain is Cytoplasmic. The helical transmembrane segment at 271–291 (AIILGHCFFAVGAVLLTGIAY) threads the bilayer. Residues 292–297 (SLPHWQ) lie on the Extracellular side of the membrane. Residues 298–318 (LLFLVGGILVIPFISYIWILP) traverse the membrane as a helical segment. The Cytoplasmic segment spans residues 319–379 (ESPRWLMMKG…DFCKNRQLCK (61 aa)). The helical transmembrane segment at 380-400 (VTLVMSCVWFTVSYTYFTLSL) threads the bilayer. The Extracellular segment spans residues 401 to 408 (RMRELGVS). Residues 409–431 (VHFRHVVPSIMEVPARLCCIFLL) form a helical membrane-spanning segment. Residues 432-437 (QQIGRK) are Cytoplasmic-facing. Residues 438 to 458 (WSLAVTLLQAIIWCLLLLFLP) traverse the membrane as a helical segment. Residues 459-488 (EGEDGLRLKWPRCPATELKSMTILVLMLRE) are Extracellular-facing. A helical membrane pass occupies residues 489–509 (FSLAATVTVFFLYTAELLPTV). The Cytoplasmic portion of the chain corresponds to 510–512 (LRA). A helical membrane pass occupies residues 513-533 (TGLGLVSLASVAGAILSLTII). Topologically, residues 534-538 (SQTPS) are extracellular. Residues 539–559 (LLPIFLCCVLAIVAFSLSSLL) traverse the membrane as a helical segment. Topologically, residues 560–594 (PETRDQPLSESLNHSSQIRNKVKDMKTKETSSDDV) are cytoplasmic. A disordered region spans residues 566–594 (PLSESLNHSSQIRNKVKDMKTKETSSDDV). Residues 567 to 578 (LSESLNHSSQIR) are compositionally biased toward polar residues. The span at 580–594 (KVKDMKTKETSSDDV) shows a compositional bias: basic and acidic residues.

This sequence belongs to the major facilitator (TC 2.A.1) superfamily. Organic cation transporter (TC 2.A.1.19) family. As to expression, ubiquitous.

The protein resides in the mitochondrion inner membrane. It is found in the cell projection. Its subcellular location is the cilium. The protein localises to the flagellum membrane. The enzyme catalyses riboflavin(in) = riboflavin(out). Riboflavin transporter localized at the inner mitochondrial membrane of the spermatozoa midpiece, which is required for male fertility. SLC22A14-mediated riboflavin transport is essential for spermatozoa energy generation and motility: riboflavin is the precursor of FMN and FAD, which are coenzymes of many enzymes in the TCA cycle (the citric acid cycle) in mitochondria. Required for sperm motility and normal sperm flagellar structure. In Homo sapiens (Human), this protein is Solute carrier family 22 member 14.